The following is a 331-amino-acid chain: C-type lectin domain family 4 member K (331 aa).

The Cytoplasmic portion of the chain corresponds to 1 to 41; it reads MPEAEMKEEAPEAHFTVDKQNISLWPREPPPKQDLSPVLRK. The chain crosses the membrane as a helical; Signal-anchor for type II membrane protein span at residues 42–62; that stretch reads PLCICVAFTCLALVLVTSIVL. Residues 63–331 lie on the Extracellular side of the membrane; it reads QAVFYPRLMG…CKRPYVQTTE (269 aa). Residues N90 and N116 are each glycosylated (N-linked (GlcNAc...) asparagine). A coiled-coil region spans residues 106-197; sequence DDAEVQMQIV…LKQQSDILEM (92 aa). In terms of domain architecture, C-type lectin spans 205 to 323; it reads FSGNFYYFSR…CDNTFLFICK (119 aa). Intrachain disulfides connect C226/C322 and C298/C314.

In terms of assembly, homotrimer. Expressed by Langerhans cells. Expressed in dendritic cells and by scattered cells in lymph nodes and spleen. Also detected in some non-lymphoid tissues such as lung, liver and heart.

The protein localises to the membrane. Functionally, calcium-dependent lectin displaying mannose-binding specificity. Induces the formation of Birbeck granules (BGs); is a potent regulator of membrane superimposition and zippering. Binds to sulfated as well as mannosylated glycans, keratan sulfate (KS) and beta-glucans. Facilitates uptake of antigens and is involved in the routing and/or processing of antigen for presentation to T cells. This is C-type lectin domain family 4 member K (Cd207) from Mus musculus (Mouse).